Here is a 438-residue protein sequence, read N- to C-terminus: MNTADTRQRLLDIEKQIASLREEQATVKAQWEAEKELIHTSRRLKEELEDLRVQAENYERSGDYGKVAEIRYGKIAEIEKALEENNRKIEARQASGDLIMKEEIDAGDIADIVSRWTGIPVSKMLQSERQKLLGIESELHRRVVGQDEAVRAVSDAVKRSRAGMGDEKRPIGSFIFLGPTGVGKTELARTLAEYLFDDEDALIRIDMSEYMEAHTVSRLVGAPPGYVGYEEGGQLTEAVRRKPFSVVLLDEIEKAHPDVFNILLQILDDGRLTDSKGRTVNFKNTIIIMTSNIGAQLIQSEMEHLEGRDADAALAGLKEKLFQLLKQQVRPEFLNRIDEVILFTPLTRENLREIVTIQFNRIKETARRQRITLEISDEALMWLAKTGFDPAFGARPLKRVMQRQITNRLSEMILAGQVGEDDTVEIGLENDAIVMKKK.

The stretch at 1 to 94 (MNTADTRQRL…NNRKIEARQA (94 aa)) forms a coiled coil. Residues 1–118 (MNTADTRQRL…IADIVSRWTG (118 aa)) form a linker region. The segment at 128–345 (ERQKLLGIES…RIDEVILFTP (218 aa)) is NBD2. 178–185 (GPTGVGKT) is an ATP binding site. The segment at 346 to 438 (LTRENLREIV…ENDAIVMKKK (93 aa)) is C-terminal.

This sequence belongs to the ClpA/ClpB family. As to quaternary structure, homohexamer. The oligomerization is ATP-dependent.

The protein localises to the cytoplasm. In terms of biological role, part of a stress-induced multi-chaperone system, it is involved in the recovery of the cell from heat-induced damage, in cooperation with DnaK, DnaJ and GrpE. Acts before DnaK, in the processing of protein aggregates. Protein binding stimulates the ATPase activity; ATP hydrolysis unfolds the denatured protein aggregates, which probably helps expose new hydrophobic binding sites on the surface of ClpB-bound aggregates, contributing to the solubilization and refolding of denatured protein aggregates by DnaK. The chain is Probable chaperone protein ClpB 1 (clpB1) from Chlorobaculum tepidum (strain ATCC 49652 / DSM 12025 / NBRC 103806 / TLS) (Chlorobium tepidum).